The chain runs to 138 residues: Thyrotropin subunit beta (138 aa).

The N-terminal stretch at 1-20 (MSAAVLLSVLFALACGQAAS) is a signal peptide. 6 disulfides stabilise this stretch: cysteine 22/cysteine 72, cysteine 36/cysteine 87, cysteine 39/cysteine 125, cysteine 47/cysteine 103, cysteine 51/cysteine 105, and cysteine 108/cysteine 115. The N-linked (GlcNAc...) asparagine glycan is linked to asparagine 43. A propeptide spanning residues 133–138 (LGGFSV) is cleaved from the precursor.

The protein belongs to the glycoprotein hormones subunit beta family. As to quaternary structure, heterodimer of a common alpha chain and a unique beta chain which confers biological specificity to thyrotropin, lutropin, follitropin and gonadotropin.

It is found in the secreted. Functionally, indispensable for the control of thyroid structure and metabolism. This chain is Thyrotropin subunit beta (Tshb), found in Mus musculus (Mouse).